The following is a 636-amino-acid chain: Ketocytochalasin monooxygenase (636 aa).

FAD is bound by residues aspartate 125, 133–136 (TWYW), aspartate 145, tyrosine 151, and isoleucine 195. An NADP(+)-binding site is contributed by 143 to 145 (ACD). NADP(+)-binding positions include 279–285 (TGASAVQ), 302–303 (RT), and 420–421 (KR). Position 534 (tryptophan 534) interacts with FAD.

The protein belongs to the FAD-binding monooxygenase family. Requires FAD as cofactor.

It carries out the reaction ketocytochalasin + NADPH + O2 + H(+) = iso-precytochalasin + NADP(+) + H2O. It catalyses the reaction iso-precytochalasin + NADPH + O2 + H(+) = cytochalasin Z16 + NADP(+) + H2O. The protein operates within mycotoxin biosynthesis. Its function is as follows. Ketocytochalasin monooxygenase; part of the gene cluster that mediates the biosynthesis of a family of the mycotoxins cytochalasins E and K. The hybrid PKS-NRPS synthetase ccsA and the enoyl reductase ccsC are responsible for fusion of phenylalanine with an octaketide backbone and subsequent release of the stable tetramic acid precursor. The polyketide synthase module (PKS) of the PKS-NRPS ccsA is responsible for the synthesis of the octaketide backbone. The downstream nonribosomal peptide synthetase (NRPS) amidates the carboxyl end of the octaketide with a phenylalanine. A reductase-like domain (R) at the C-terminus catalyzes the reductive release of the polyketide-amino acid intermediate. Because ccsA lacks a designated enoylreductase (ER) domain, the required activity is provided the enoyl reductase ccsC. Upon formation of the 11-membered carbocycle-fused perhydroisoindolone intermediate, a number of oxidative steps are required to afford the final cytochalasin E and K, including two hydroxylations at C17 and C18, one alcohol oxidation at C17, one epoxidation at C6 and C7 and two Baeyer-Villiger oxidations. The oxidative modification at C17, C18 and the C6-C7 epoxidation are likely to be catalyzed by the two cytochrome P450 oxygenases ccsD and ccsG. CcsD may be responsible for the epoxidation of the C6-C7 double bond. CcsG may be responsible for the successive oxidative modifications at C17 and C18. The double Baeyer-Villiger oxidations of ketocytochalasin to precytochalasin and cytochalasin Z(16) are among the final steps leading to cytochalasin E and K and are catalyzed by ccsB. The first oxygen insertion step follows that of the classic BVMO mechanism, generating the ester precytochalasin. Release of precytochalasin into an aqueous environment can generate the shunt product iso-precytochalasin through spontaneous isomerization. Alternatively, precytochalasin can undergo further oxidation by ccsB to yield the in-line carbonate-containing cytochalasin Z(16). Cytochalasin Z(16) is a precursor to cytochalasin E and cytochalasin K, whereas iso-precytochalasin is a precursor to cytochalasin Z(17) and rosellichalasin. The hydrolyase ccsE may catalyze hydrolysis of epoxide bond in cytochalasin E to afford cytochalasin K. The function of ccsF has not been assigned but it may play a role in post-PKS-NRPS biosynthetic step, resistance or transport of cytochalasins and related PKS-NRPS products. The chain is Ketocytochalasin monooxygenase from Aspergillus clavatus (strain ATCC 1007 / CBS 513.65 / DSM 816 / NCTC 3887 / NRRL 1 / QM 1276 / 107).